The following is a 264-amino-acid chain: Movement protein (264 aa).

The interval 211–264 (RTKSSKRGPKNNNNLGKGRSGGRPKPKSVDEVEEEFDNLIEDEAETSVADSDSY) is disordered. A compositionally biased stretch (acidic residues) spans 241–255 (EVEEEFDNLIEDEAE).

The protein belongs to the tobamovirus movement protein family. As to quaternary structure, binds to host RBCS at the plasmodesmata; this interaction seems required for viral systemic movement. In resistant plants, interacts with host MBP2C at host microtubules; this interaction prevents virus cell to cell movement. In resistant plants, interacts with host resistance (R) protein (e.g. tomato ToMV resistance protein TM-2(2), AC Q71BG9) at the host plasma membrane; this interaction triggers host defense responses leading to programmed cell death.

It is found in the host cytoplasm. Its subcellular location is the host cytoskeleton. It localises to the host cell junction. The protein resides in the host plasmodesma. In terms of biological role, transports viral genome to neighboring plant cells directly through plasmosdesmata, without any budding. The movement protein allows efficient cell to cell propagation, by bypassing the host cell wall barrier. Forms a ribonucleoprotein complex with viral RNA. Binds microtubules and modulates microtubule stability. Can bind double-stranded DNA. Triggers host hypersensitive defense reaction in incompatible plants harboring resistance (R) proteins. This chain is Movement protein (MP), found in Antirrhinum majus (Garden snapdragon).